A 49-amino-acid polypeptide reads, in one-letter code: Small ribosomal subunit protein eS31 (49 aa).

Residues C21, C24, C39, and C42 each contribute to the Zn(2+) site. Residues 21–42 (CPRCGNGVFLAEHEDRMSCGRC) form a C4-type zinc finger.

This sequence belongs to the eukaryotic ribosomal protein eS31 family. In terms of assembly, part of the 30S ribosomal subunit. Zn(2+) serves as cofactor.

This Methanothrix thermoacetophila (strain DSM 6194 / JCM 14653 / NBRC 101360 / PT) (Methanosaeta thermophila) protein is Small ribosomal subunit protein eS31.